We begin with the raw amino-acid sequence, 407 residues long: RING finger protein 44 (407 aa).

Residues 26-58 (LSSSPGQLWGRPSNLSVEEHRASAPAGRSPRML) are disordered. The RING-type; atypical zinc-finger motif lies at 355–396 (CVVCFSDFEVRQLLRVLPCNHEFHAKCVDKWLKANRTCPICR).

The chain is RING finger protein 44 (Rnf44) from Mus musculus (Mouse).